A 160-amino-acid polypeptide reads, in one-letter code: Ubiquitin-conjugating enzyme E2 16 (160 aa).

A UBC core domain is found at 3–153 (SSIKRLHKEY…VRCTTYLYAK (151 aa)). Residue cysteine 90 is the Glycyl thioester intermediate of the active site.

It belongs to the ubiquitin-conjugating enzyme family.

It catalyses the reaction S-ubiquitinyl-[E1 ubiquitin-activating enzyme]-L-cysteine + [E2 ubiquitin-conjugating enzyme]-L-cysteine = [E1 ubiquitin-activating enzyme]-L-cysteine + S-ubiquitinyl-[E2 ubiquitin-conjugating enzyme]-L-cysteine.. The protein operates within protein modification; protein ubiquitination. Catalyzes the covalent attachment of ubiquitin to other proteins. This is Ubiquitin-conjugating enzyme E2 16 (ubc16) from Schizosaccharomyces pombe (strain 972 / ATCC 24843) (Fission yeast).